A 1119-amino-acid polypeptide reads, in one-letter code: Transient receptor potential cation channel subfamily A member 1 (1119 aa).

Residues 1 to 718 are Cytoplasmic-facing; sequence MKRSLRKMWR…MKWLAYGFRA (718 aa). ANK repeat units lie at residues 62–92, 97–126, 130–160, 164–193, 197–226, 238–267, 271–301, 308–337, 341–370, 374–403, 412–441, 445–474, 481–510, 513–542, 547–576, and 579–609; these read MDTF…EVLH, YGNT…NPNL, NMMA…DVNL, NGNT…KPCK, WGCF…EHGY, GKAT…QIDP, GRCT…SVDI, CHET…DINK, EGRS…QVDI, FGRN…QQIK, DGCT…SIHS, DKKS…DTRL, HGMT…LFLS, NGWT…KCTD, DGNT…DIVL, and QQAS…DECL. 5 disulfide bridges follow: cysteine 192/cysteine 665, cysteine 462/cysteine 665, cysteine 608/cysteine 621, cysteine 621/cysteine 665, and cysteine 633/cysteine 856. Proline 394 carries the 4-hydroxyproline; by EGLN1; transient; in normoxia and hyperoxia modification. (E)-cinnamaldehyde-binding residues include cysteine 414 and cysteine 421. Cysteine 621 is a (E)-cinnamaldehyde binding site. Cysteine 633 is subject to Cysteine sulfenic acid (-SOH); transient; in hyperoxia. (E)-cinnamaldehyde contacts are provided by cysteine 641, cysteine 665, and lysine 710. A helical membrane pass occupies residues 719–739; that stretch reads HMMNLGSYCLGLIPMTILVVN. Over 740–767 the chain is Extracellular; that stretch reads IKPGMAFNSTGIINETSDHSEILDTTNS. Asparagine 747 and asparagine 753 each carry an N-linked (GlcNAc...) asparagine glycan. A helical transmembrane segment spans residues 768-793; sequence YLIKTCMILVFLSSIFGYCKEAGQIF. The Ca(2+) site is built by glutamate 788 and glutamine 791. Residues 794 to 798 are Cytoplasmic-facing; sequence QQKRN. A helical transmembrane segment spans residues 799 to 823; the sequence is YFMDISNVLEWIIYTTGIIFVLPLF. Positions 805 and 808 each coordinate Ca(2+). Residues 824-829 are Extracellular-facing; it reads VEIPAH. The helical transmembrane segment at 830-850 threads the bilayer; it reads LQWQCGAIAVYFYWMNFLLYL. The Cytoplasmic portion of the chain corresponds to 851-862; the sequence is QRFENCGIFIVM. Cysteine 856 bears the Cysteine sulfenic acid (-SOH); transient; in hyperoxia mark. A helical membrane pass occupies residues 863–892; the sequence is LEVILKTLLRSTVVFIFLLLAFGLSFYILL. The Extracellular portion of the chain corresponds to 893–901; sequence NLQDPFSSP. Residues 902-922 constitute an intramembrane region (pore-forming); that stretch reads LLSIIQTFSMMLGDINYRESF. At 923-933 the chain is on the extracellular side; that stretch reads LEPYLRNELAH. The chain crosses the membrane as a helical span at residues 934–960; sequence PVLSFAQLVSFTIFVPIVLMNLLIGLA. The Cytoplasmic segment spans residues 961 to 1119; that stretch reads VGDIAEVQKH…VKAKTHHLEP (159 aa). The stretch at 1042–1071 forms a coiled coil; sequence MEILKQKYRLKDLTFLLEKQHELIKLIIQK. 1046–1052 lines the a 1,2-diacyl-sn-glycero-3-phospho-(1D-myo-inositol) pocket; sequence KQKYRLK.

The protein belongs to the transient receptor (TC 1.A.4) family. As to quaternary structure, homotetramer. Interacts with TMEM100. Interacts with EGLN1. Interacts with the scorpion wasabi receptor toxin at the same site that electrophiles but in a non-covalent manner. In terms of processing, TRPA1 activation by electrophiles occurs though covalent modification of specific cysteine residues in the N-terminal cytoplasmic domain. Post-translationally, hydroxylation is required for TRPA1 activity inhibition in normoxia. In hypoxia, the decrease in oxygen concentration diminishes the activity of the hydroxylase EGLN1, thus relieving TRPA1 from inhibition and ultimately leading to channel activation. Oxidation of Cys-633 and Cys-856 in hyperoxia may override the hydroxylase EGLN1-mediated inhibition, causing TRPA1 activation.

The protein localises to the cell membrane. The enzyme catalyses Ca(2+)(in) = Ca(2+)(out). It carries out the reaction Mg(2+)(in) = Mg(2+)(out). The catalysed reaction is Na(+)(in) = Na(+)(out). It catalyses the reaction K(+)(in) = K(+)(out). The enzyme catalyses Zn(2+)(in) = Zn(2+)(out). Its activity is regulated as follows. Electrophilic ligands activate the channel by covalent modification of intracellular cysteines; Cys-621 plays a key role in covalent binding of electrophiles. Extracellular Ca(2+) both potentiates and inactivates TRPA1; a rapid potentiation follows by slow desensitization. Activated by increase in intracellular Ca(2+) concentration. Inhibited by the potent blocker of TRPV channels ruthenium red, A-967079, AP-18, HC-030031, and aryl sulfonamide derivative (S)-N-(4-chlorobenzyl)-1-((4-fluorophenyl)sulfonyl)pyrrolidine-2-carboxamide (ASD). Activated by benzyl isothiocyanate (BITC), iodoacetamide, sulfhydryl reactive agent MTSEA, N-methyl maleimide (NMM), N-ethylmaleimide (NEM), and 2-aminoethyldiphenylborinate (2-APB). Also activated by hyperoxia. Acivated by intracellular Zn(2+). TRPA1 activation may critically depend on the presence of small intracellular compounds such as polyphosphates. Ligand-activated Ca(2+)-permeable, nonselective cation channel involved in pain detection and possibly also in cold perception, oxygen concentration perception, cough, itch, and inner ear function. Has a relatively high Ca(2+) selectivity, with a preference for divalent over monovalent cations (Ca(2+) &gt; Ba(2+) &gt; Mg(2+) &gt; NH4(+) &gt; Li(+) &gt; K(+)), the influx of cation into the cytoplasm leads to membrane depolarization. Has a central role in the pain response to endogenous inflammatory mediators, such as bradykinin and to a diverse array of irritants. Activated by a large variety of structurally unrelated electrophilic and non-electrophilic chemical compounds, such as allylthiocyanate (AITC) from mustard oil or wasabi, cinnamaldehyde, diallyl disulfide (DADS) from garlic, and acrolein, an environmental irritant. Electrophilic ligands activate TRPA1 by interacting with critical N-terminal Cys residues in a covalent manner. Non-electrophile agonists bind at distinct sites in the transmembrane domain to promote channel activation. Also acts as an ionotropic cannabinoid receptor by being activated by delta(9)-tetrahydrocannabinol (THC), the psychoactive component of marijuana. May be a component for the mechanosensitive transduction channel of hair cells in inner ear, thereby participating in the perception of sounds. This is Transient receptor potential cation channel subfamily A member 1 from Homo sapiens (Human).